The primary structure comprises 284 residues: MKDSHQTIGVFVRPTHYQNPLFKELEQAKEWVLKLLEDEGFESFMIDSLDGAKDERLIEKADAFLCLGGDGTILGALRMTHSYNKPCFGVRIGNLGFLSAVELNGLKDFLQDLKQDRIKLEEHLALEGRIGNTSFYAINEIVIAKKKALGVLDIKAYAGHTPFNTYKGDGLIIATPLGSTAYNLSAHGPIVHALSQSYILTPLCDFSLTQRPLVLGAEFCLNFCTHEDALVVIDGQSTYDLKANQPLYIQKSPTTTKLLQKNSRDYFKVLKEKLLWGESPSKKR.

Residue D70 is the Proton acceptor of the active site. NAD(+) contacts are provided by residues 70–71 (DG), 139–140 (NE), K167, D169, L177, 180–185 (TAYNLS), and Q236.

It belongs to the NAD kinase family. A divalent metal cation is required as a cofactor.

It localises to the cytoplasm. The enzyme catalyses NAD(+) + ATP = ADP + NADP(+) + H(+). In terms of biological role, involved in the regulation of the intracellular balance of NAD and NADP, and is a key enzyme in the biosynthesis of NADP. Catalyzes specifically the phosphorylation on 2'-hydroxyl of the adenosine moiety of NAD to yield NADP. The sequence is that of NAD kinase from Helicobacter pylori (strain P12).